The following is a 390-amino-acid chain: Period circadian protein (390 aa).

Disordered regions lie at residues 27 to 120, 164 to 188, 247 to 266, and 327 to 356; these read VTAP…APPV, LEYS…WEGE, GGNG…STNQ, and SPSG…TSQA. The span at 93–114 shows a compositional bias: gly residues; the sequence is GTSGTGNSGDGGGGGGADGTGS. The segment covering 247 to 256 has biased composition (gly residues); it reads GGNGNVGSGN.

In terms of assembly, forms a heterodimer with timeless (TIM); the complex then translocates into the nucleus. Post-translationally, phosphorylated with a circadian rhythmicity, probably by the double-time protein (dbt). Phosphorylation could be implicated in the stability of per monomer and in the formation of heterodimer per-tim.

It is found in the nucleus. The protein resides in the cytoplasm. The protein localises to the perinuclear region. Essential for biological clock functions. Determines the period length of circadian and ultradian rhythms; an increase in PER dosage leads to shortened circadian rhythms and a decrease leads to lengthened circadian rhythms. Essential for the circadian rhythmicity of locomotor activity, eclosion behavior, and for the rhythmic component of the male courtship song that originates in the thoracic nervous system. The biological cycle depends on the rhythmic formation and nuclear localization of the TIM-PER complex. Light induces the degradation of TIM, which promotes elimination of PER. Nuclear activity of the heterodimer coordinatively regulates PER and TIM transcription through a negative feedback loop. Behaves as a negative element in circadian transcriptional loop. Does not appear to bind DNA, suggesting indirect transcriptional inhibition. This is Period circadian protein (per) from Drosophila tropicalis (Fruit fly).